Consider the following 291-residue polypeptide: 4-hydroxy-tetrahydrodipicolinate synthase (291 aa).

Thr45 is a binding site for pyruvate. Tyr133 (proton donor/acceptor) is an active-site residue. Lys161 (schiff-base intermediate with substrate) is an active-site residue. A pyruvate-binding site is contributed by Ile203.

This sequence belongs to the DapA family. Homotetramer; dimer of dimers.

The protein localises to the cytoplasm. The enzyme catalyses L-aspartate 4-semialdehyde + pyruvate = (2S,4S)-4-hydroxy-2,3,4,5-tetrahydrodipicolinate + H2O + H(+). The protein operates within amino-acid biosynthesis; L-lysine biosynthesis via DAP pathway; (S)-tetrahydrodipicolinate from L-aspartate: step 3/4. Functionally, catalyzes the condensation of (S)-aspartate-beta-semialdehyde [(S)-ASA] and pyruvate to 4-hydroxy-tetrahydrodipicolinate (HTPA). The polypeptide is 4-hydroxy-tetrahydrodipicolinate synthase (Acidithiobacillus ferrooxidans (strain ATCC 23270 / DSM 14882 / CIP 104768 / NCIMB 8455) (Ferrobacillus ferrooxidans (strain ATCC 23270))).